Consider the following 253-residue polypeptide: Major prion protein (253 aa).

An N-terminal signal peptide occupies residues 1–22 (MANLGCWMLVLFVATWSDLGLC). Residues 23 to 230 (KKRPKPGGWN…ESQAYYQRGS (208 aa)) are interaction with GRB2, ERI3 and SYN1. A disordered region spans residues 26–108 (PKPGGWNTGG…WNKPSKPKTN (83 aa)). Repeat copies occupy residues 51-59 (PQGGGGWGQ), 60-67 (PHGGGWGQ), 68-75 (PHGGGWGQ), 76-83 (PHGGGWGQ), and 84-91 (PHGGGWGQ). A 5 X 8 AA tandem repeats of P-H-G-G-G-W-G-Q region spans residues 51 to 91 (PQGGGGWGQPHGGGWGQPHGGGWGQPHGGGWGQPHGGGWGQ). Residues 52 to 95 (QGGGGWGQPHGGGWGQPHGGGWGQPHGGGWGQPHGGGWGQGGGT) show a composition bias toward gly residues. 12 residues coordinate Cu(2+): His61, Gly62, Gly63, His69, Gly70, Gly71, His77, Gly78, Gly79, His85, Gly86, and Gly87. The cysteines at positions 179 and 214 are disulfide-linked. Residues Asn181 and Asn197 are each glycosylated (N-linked (GlcNAc...) asparagine). The GPI-anchor amidated serine moiety is linked to residue Ser230. A propeptide spans 231-253 (SMVLFSSPPVILLISFLIFLIVG) (removed in mature form).

It belongs to the prion family. Monomer and homodimer. Has a tendency to aggregate into amyloid fibrils containing a cross-beta spine, formed by a steric zipper of superposed beta-strands. Soluble oligomers may represent an intermediate stage on the path to fibril formation. Copper binding may promote oligomerization. Interacts with GRB2, APP, ERI3/PRNPIP and SYN1. Mislocalized cytosolically exposed PrP interacts with MGRN1; this interaction alters MGRN1 subcellular location and causes lysosomal enlargement. Interacts with KIAA1191.

It is found in the cell membrane. The protein localises to the golgi apparatus. Its primary physiological function is unclear. Has cytoprotective activity against internal or environmental stresses. May play a role in neuronal development and synaptic plasticity. May be required for neuronal myelin sheath maintenance. May play a role in iron uptake and iron homeostasis. Soluble oligomers are toxic to cultured neuroblastoma cells and induce apoptosis (in vitro). Association with GPC1 (via its heparan sulfate chains) targets PRNP to lipid rafts. Also provides Cu(2+) or Zn(2+) for the ascorbate-mediated GPC1 deaminase degradation of its heparan sulfate side chains. This chain is Major prion protein (PRNP), found in Hylobates lar (Lar gibbon).